Reading from the N-terminus, the 525-residue chain is Zinc finger C2HC domain-containing protein 1C (525 aa).

The segment covering 23–34 (AHGLHSAKHDPY) has biased composition (basic and acidic residues). 3 disordered regions span residues 23-48 (AHGLHSAKHDPYEQSDSPQRSSMGHL), 85-107 (CPHSAGISQQGSGNNAQGQGKGL), and 145-171 (VHRKSHSTSETGIDGDQNGYPRLPDSS). Residues 36 to 48 (QSDSPQRSSMGHL) are compositionally biased toward polar residues. Positions 90 to 102 (GISQQGSGNNAQG) are enriched in low complexity. Residues 207-252 (TQIQRLEAAGESLQKEIRRKEILLREKLKKTEEGLRRIQREKKQAI) are a coiled coil. Disordered stretches follow at residues 292-316 (SRNRGEDQTCEQAQENSSPLQLSDY), 330-349 (NNKIRDRDSGPSAGTFSQPA), and 356-379 (LQASSLSGTPGSSGSSSSTEEQEL). Over residues 301-312 (CEQAQENSSPLQ) the composition is skewed to polar residues. Over residues 359-373 (SSLSGTPGSSGSSSS) the composition is skewed to low complexity. C2HC/C3H-type zinc fingers lie at residues 378 to 407 (ELGKCSHCGRSFLSLRLQRHSTVCGKMQGS) and 487 to 516 (DYVQCPHCSRHFAPKVAERHIPKCKTIKNR). Residues C382, C385, H397, C401, C491, C494, H506, and C510 each coordinate Zn(2+).

This sequence belongs to the ZC2HC1 family. The cofactor is Zn(2+).

This chain is Zinc finger C2HC domain-containing protein 1C (Zc2hc1c), found in Rattus norvegicus (Rat).